The following is a 96-amino-acid chain: Co-chaperonin GroES (96 aa).

This sequence belongs to the GroES chaperonin family. As to quaternary structure, heptamer of 7 subunits arranged in a ring. Interacts with the chaperonin GroEL.

Its subcellular location is the cytoplasm. Together with the chaperonin GroEL, plays an essential role in assisting protein folding. The GroEL-GroES system forms a nano-cage that allows encapsulation of the non-native substrate proteins and provides a physical environment optimized to promote and accelerate protein folding. GroES binds to the apical surface of the GroEL ring, thereby capping the opening of the GroEL channel. The protein is Co-chaperonin GroES of Geobacter sp. (strain M21).